Reading from the N-terminus, the 134-residue chain is Large ribosomal subunit protein uL16c (134 aa).

It belongs to the universal ribosomal protein uL16 family. Part of the 50S ribosomal subunit.

It is found in the plastid. Its subcellular location is the chloroplast. This is Large ribosomal subunit protein uL16c from Solanum lycopersicum (Tomato).